Reading from the N-terminus, the 861-residue chain is DNA primase (861 aa).

Residues 805 to 843 (CLTRNHKGNRENVLVYLEFKVDNNRILIILWSKCFTTKC) form a CHC2-type zinc finger.

It belongs to the herpesviridae DNA primase family. In terms of assembly, associates with the helicase and the primase-associated factor to form the helicase-primase factor.

It localises to the host nucleus. Functionally, essential component of the helicase/primase complex. Unwinds the DNA at the replication forks and generates single-stranded DNA for both leading and lagging strand synthesis. The primase initiates primer synthesis and thereby produces large amount of short RNA primers on the lagging strand that the polymerase elongates using dNTPs. This is DNA primase (U43) from Human herpesvirus 7 (strain JI) (HHV-7).